The primary structure comprises 336 residues: Phosphoribosylformylglycinamidine cyclo-ligase (336 aa).

It belongs to the AIR synthase family.

The protein localises to the cytoplasm. The catalysed reaction is 2-formamido-N(1)-(5-O-phospho-beta-D-ribosyl)acetamidine + ATP = 5-amino-1-(5-phospho-beta-D-ribosyl)imidazole + ADP + phosphate + H(+). It participates in purine metabolism; IMP biosynthesis via de novo pathway; 5-amino-1-(5-phospho-D-ribosyl)imidazole from N(2)-formyl-N(1)-(5-phospho-D-ribosyl)glycinamide: step 2/2. The chain is Phosphoribosylformylglycinamidine cyclo-ligase from Caldanaerobacter subterraneus subsp. tengcongensis (strain DSM 15242 / JCM 11007 / NBRC 100824 / MB4) (Thermoanaerobacter tengcongensis).